We begin with the raw amino-acid sequence, 85 residues long: ATP synthase subunit 9, mitochondrial (85 aa).

The next 2 helical transmembrane spans lie at 19–39 and 61–81; these read IGAGAATIALAGAAIGIGNVF and ILGFALTEAIALFALMMAFLI.

This sequence belongs to the ATPase C chain family. As to quaternary structure, F-type ATPases have 2 components, CF(1) - the catalytic core - and CF(0) - the membrane proton channel. CF(1) has five subunits: alpha(3), beta(3), gamma(1), delta(1), epsilon(1). CF(0) has three main subunits: a, b and c.

The protein resides in the mitochondrion membrane. In terms of biological role, this protein is one of the chains of the nonenzymatic membrane component (F0) of mitochondrial ATPase. This chain is ATP synthase subunit 9, mitochondrial (ATP9), found in Arabidopsis thaliana (Mouse-ear cress).